Consider the following 495-residue polypeptide: Putative BTB/POZ domain-containing protein L98 (495 aa).

Residues 15 to 85 (SDLTIEFVDN…FYGIETTNDY (71 aa)) enclose the BTB domain.

The protein belongs to the mimivirus BTB/WD family.

The sequence is that of Putative BTB/POZ domain-containing protein L98 from Acanthamoeba polyphaga (Amoeba).